Consider the following 462-residue polypeptide: Cysteine--tRNA ligase (462 aa).

Residue C24 coordinates Zn(2+). The short motif at 26–36 (PTVYDDAHLGH) is the 'HIGH' region element. Positions 199, 224, and 228 each coordinate Zn(2+). Residues 256-260 (KMSKS) carry the 'KMSKS' region motif. K259 is a binding site for ATP.

It belongs to the class-I aminoacyl-tRNA synthetase family. As to quaternary structure, monomer. Requires Zn(2+) as cofactor.

The protein resides in the cytoplasm. It carries out the reaction tRNA(Cys) + L-cysteine + ATP = L-cysteinyl-tRNA(Cys) + AMP + diphosphate. The polypeptide is Cysteine--tRNA ligase (Campylobacter jejuni subsp. doylei (strain ATCC BAA-1458 / RM4099 / 269.97)).